A 614-amino-acid polypeptide reads, in one-letter code: Dihydroxy-acid dehydratase (614 aa).

Asp-81 contacts Mg(2+). Residue Cys-122 coordinates [2Fe-2S] cluster. Residues Asp-123 and Lys-124 each coordinate Mg(2+). The residue at position 124 (Lys-124) is an N6-carboxylysine. A [2Fe-2S] cluster-binding site is contributed by Cys-193. A Mg(2+)-binding site is contributed by Glu-489. Ser-515 acts as the Proton acceptor in catalysis.

Belongs to the IlvD/Edd family. As to quaternary structure, homodimer. Requires [2Fe-2S] cluster as cofactor. Mg(2+) is required as a cofactor.

It catalyses the reaction (2R)-2,3-dihydroxy-3-methylbutanoate = 3-methyl-2-oxobutanoate + H2O. The catalysed reaction is (2R,3R)-2,3-dihydroxy-3-methylpentanoate = (S)-3-methyl-2-oxopentanoate + H2O. Its pathway is amino-acid biosynthesis; L-isoleucine biosynthesis; L-isoleucine from 2-oxobutanoate: step 3/4. The protein operates within amino-acid biosynthesis; L-valine biosynthesis; L-valine from pyruvate: step 3/4. In terms of biological role, functions in the biosynthesis of branched-chain amino acids. Catalyzes the dehydration of (2R,3R)-2,3-dihydroxy-3-methylpentanoate (2,3-dihydroxy-3-methylvalerate) into 2-oxo-3-methylpentanoate (2-oxo-3-methylvalerate) and of (2R)-2,3-dihydroxy-3-methylbutanoate (2,3-dihydroxyisovalerate) into 2-oxo-3-methylbutanoate (2-oxoisovalerate), the penultimate precursor to L-isoleucine and L-valine, respectively. This chain is Dihydroxy-acid dehydratase, found in Marinomonas sp. (strain MWYL1).